Consider the following 294-residue polypeptide: MDSELVSYLAEQTAEPRLVIDEDEVQVYRPVGQGAKRRINSEESDVSEDGNSKPKRVRRSSVEIIFREIKKNNEKKLKDDFKASDYEELEDDDDDESIEEESDSEFEGESSSDEEESSYDSDSDYDSETEPEDSDDDFEAPVVKIPEDRQVLSAKRRCTRSLGVIVKTVEEVTHENRLKVNSMSVCDLPIDNMADLKVEHIKFYKRNTTFTEEELAEIEEDLLAEVKARYNNMKGDFRRSKTIETTEDDKKAGEVNKYDIDDDFIEKTESDEEEEITEDDSSEQETVVVEPVDE.

Disordered regions lie at residues 25–59 and 77–141; these read VQVY…RVRR and LKDD…FEAP. Residues 86 to 139 show a composition bias toward acidic residues; sequence YEELEDDDDDESIEEESDSEFEGESSSDEEESSYDSDSDYDSETEPEDSDDDFE. Residues 201 to 234 adopt a coiled-coil conformation; that stretch reads IKFYKRNTTFTEEELAEIEEDLLAEVKARYNNMK. The span at 242-259 shows a compositional bias: basic and acidic residues; it reads TIETTEDDKKAGEVNKYD. The segment at 242–294 is disordered; the sequence is TIETTEDDKKAGEVNKYDIDDDFIEKTESDEEEEITEDDSSEQETVVVEPVDE. The span at 260 to 283 shows a compositional bias: acidic residues; that stretch reads IDDDFIEKTESDEEEEITEDDSSE.

This is an uncharacterized protein from Magallana gigas (Pacific oyster).